The sequence spans 753 residues: MSDVKYFEDTEFGLIEAVATIDNGDFGTRTIRFETGQLARQADGAVTTYLDDDTMLLATTTASNQPREGFDFFPLTVDVEERMYAAGRIPGSFFRREGRPSTEAILACRLIDRPLRPTFVKGLRNEVQIVVTVMSMNPEDYYDVVAINGASAATRISGLPVSGAVGGVRMALVVDEKHPEGQWVAFPTHAQHEQSVFEIVVAGRLVERKRGNKTFSDVAVMMVEAGASENVVNRVKDGAPAPTEKIVSDGLEAAKPFIDILCRAQEGLAQRVGNAAKEFPLFPPYTDEVYSAVERKVSKKLASLLTLKAKQERDDATNAYMEEIEAELLPKFEASYSSAAEASKEIRAGYNAVMKAIVRRMILTDHFRIDGRGVTDIRDLAVEVELIPRAHGSSLFERGETQILGVTTLDMLKMEQQIDSLAPGDAKRYMHHYNFPPYSTGETGRVGSPKRREIGHGALAERAVLPVIPSREEFPYAIRQVSEALGSNGSTSMGSVCASTLSLYNAGVPLKAPVAGIAMGLVSGEIDGKTEYVALTDILGAEDAFGDMDFKVAGTADFITALQLDTKLDGIPSKVLSDALEQARDARLTILNTMADVINGPDEMSKFAPRITTVKIPVAKIGELIGPKGKNINALTEETGANISIEDDGTVFISAADGASAEAAIEKINALANPQLPKVGERFLGTVVKTTAFGAFVSLLPGRDGLVHISKLGNGKRVEKVDDVVKVGEKIQVEIADIDNRGKISLVPVVEED.

Mg(2+) is bound by residues Asp-543 and Asp-549. The KH domain occupies Pro-609–Ile-668. The region spanning Gly-680 to Val-749 is the S1 motif domain.

It belongs to the polyribonucleotide nucleotidyltransferase family. The cofactor is Mg(2+).

Its subcellular location is the cytoplasm. The catalysed reaction is RNA(n+1) + phosphate = RNA(n) + a ribonucleoside 5'-diphosphate. Functionally, involved in mRNA degradation. Catalyzes the phosphorolysis of single-stranded polyribonucleotides processively in the 3'- to 5'-direction. The sequence is that of Polyribonucleotide nucleotidyltransferase from Corynebacterium glutamicum (strain ATCC 13032 / DSM 20300 / JCM 1318 / BCRC 11384 / CCUG 27702 / LMG 3730 / NBRC 12168 / NCIMB 10025 / NRRL B-2784 / 534).